Reading from the N-terminus, the 1515-residue chain is DNA topoisomerase 2-binding protein 1 (1515 aa).

BRCT domains are found at residues 101 to 189 (VYNM…KYTD) and 195 to 284 (FKCP…IYKA). Thr-298 carries the post-translational modification Phosphothreonine. BRCT domains follow at residues 353–443 (APED…SYIH), 551–636 (REEG…SNPL), and 644–741 (SGVT…HFLV). The tract at residues 759 to 893 (VSSNPDLPAH…TDSHSASPQL (135 aa)) is interaction with CIP2A. Phosphothreonine is present on Thr-782. The interval 799–826 (SQQRGQDPTFPPVRQPLTKEPSLHLDTP) is disordered. Position 851 is a phosphothreonine (Thr-851). Ser-862, Ser-863, Ser-866, Ser-888, and Ser-890 each carry phosphoserine. The segment covering 880-891 (SSRNTDSHSASP) has biased composition (polar residues). The tract at residues 880–901 (SSRNTDSHSASPQLKGAHLEEE) is disordered. In terms of domain architecture, BRCT 6 spans 902–993 (ETRKPLDSVV…KHLPESLYPH (92 aa)). The disordered stretch occupies residues 1020 to 1055 (VSASKDDGPDHLSVEGNETNTMGTNDKESPLLNGSG). Over residues 1023 to 1032 (SKDDGPDHLS) the composition is skewed to basic and acidic residues. Residue Thr-1064 is modified to Phosphothreonine. The segment covering 1097–1116 (SRSSCNSASSTPDSARSVRS) has biased composition (low complexity). Disordered stretches follow at residues 1097–1119 (SRSSCNSASSTPDSARSVRSGRS), 1203–1255 (VTQA…TQEE), and 1491–1515 (KKGGPGLPQKRKTPAENVVKRPRVH). Residues 1217–1229 (PPVAERPLIPEPQ) show a composition bias toward pro residues. One can recognise a BRCT 7 domain in the interval 1255–1347 (ETHRKVKKQY…RFVQEEDYEW (93 aa)). Residues 1510–1513 (KRPR) carry the Nuclear localization signal motif.

The protein belongs to the TOPBP1 family. As to quaternary structure, interacts (via BRCT domains 1 and 2) with (phosphorylated) MDC1; promoting TOPBP1 recruitment to DNA damage sites during mitosis. Interacts (via BRCT domains 7 and 8) with (autophosphorylated) ATR; promoting activation of ATR. Interacts (via BRCT domains 7 and 8) with (phosphorylated) POLQ; specifically binds POLQ phosphorylated by PLK1, promoting POLQ recruitment to DNA damage sites. Interacts (via BRCT domains 1 and 2) with (phosphorylated) RAD9A. Interacts (via BRCT domain 2) with (phosphorylated) TP53BP1. Interacts (via BRCT domain 2) with (phosphorylated) HTATSF1. Interacts (via BRCT domains 7 and 8) with (phosphorylated) RAD51; promoting RAD51 recruitment to damaged chromatin. Interacts with CIP2A; forming the CIP2A-TOPBP1 complex. Interacts with POLE. Interacts with UBR5. Interacts with E2F1. Interacts with PML. Interacts with SMARCA2. Interacts with SMARCA4. Interacts with RHNO1. May interact with TOP2B. Interacts with TICRR. Interacts with HELB. Phosphorylated on serine and threonine residues in response to X-ray irradiation. Post-translationally, ubiquitinated and degraded by the proteasome. X-ray irradiation reduces ubiquitination. Deubiquitinated by USP13; leading to TOPBP1 stabilizion and activation of the ATR-TOPBP1 axis pathway. Highly expressed in testis.

Its subcellular location is the nucleus. The protein resides in the chromosome. The protein localises to the cytoplasm. It is found in the cytoskeleton. It localises to the microtubule organizing center. Its subcellular location is the centrosome. The protein resides in the spindle pole. Scaffold protein that acts as a key protein-protein adapter in DNA replication and DNA repair. Composed of multiple BRCT domains, which specifically recognize and bind phosphorylated proteins, bringing proteins together into functional combinations. Required for DNA replication initiation but not for the formation of pre-replicative complexes or the elongation stages. Necessary for the loading of replication factors onto chromatin, including GMNC, CDC45, DNA polymerases and components of the GINS complex. Plays a central role in DNA repair by bridging proteins and promoting recruitment of proteins to DNA damage sites. Involved in double-strand break (DSB) repair via homologous recombination in S-phase by promoting the exchange between the DNA replication factor A (RPA) complex and RAD51. Mechanistically, TOPBP1 is recruited to DNA damage sites in S-phase via interaction with phosphorylated HTATSF1, and promotes the loading of RAD51, thereby facilitating RAD51 nucleofilaments formation and RPA displacement, followed by homologous recombination. Involved in microhomology-mediated end-joining (MMEJ) DNA repair by promoting recruitment of polymerase theta (POLQ) to DNA damage sites during mitosis. MMEJ is an alternative non-homologous end-joining (NHEJ) machinery that takes place during mitosis to repair DSBs in DNA that originate in S-phase. Recognizes and binds POLQ phosphorylated by PLK1, enabling its recruitment to DSBs for subsequent repair. Involved in G1 DNA damage checkpoint by acting as a molecular adapter that couples TP53BP1 and the 9-1-1 complex. In response to DNA damage, triggers the recruitment of checkpoint signaling proteins on chromatin, which activate the CHEK1 signaling pathway and block S-phase progression. Acts as an activator of the kinase activity of ATR. Also required for chromosomal stability when DSBs occur during mitosis by forming filamentous assemblies that bridge MDC1 and tether broken chromosomes during mitosis. Together with CIP2A, plays an essential role in the response to genome instability generated by the presence of acentric chromosome fragments derived from shattered chromosomes within micronuclei. Micronuclei, which are frequently found in cancer cells, consist of chromatin surrounded by their own nuclear membrane: following breakdown of the micronuclear envelope, a process associated with chromothripsis, the CIP2A-TOPBP1 complex tethers chromosome fragments during mitosis to ensure clustered segregation of the fragments to a single daughter cell nucleus, facilitating re-ligation with limited chromosome scattering and loss. Recruits the SWI/SNF chromatin remodeling complex to E2F1-responsive promoters, thereby down-regulating E2F1 activity and inhibiting E2F1-dependent apoptosis during G1/S transition and after DNA damage. The sequence is that of DNA topoisomerase 2-binding protein 1 from Mus musculus (Mouse).